Consider the following 353-residue polypeptide: O-antigen biosynthesis glycosyltransferase WclY (353 aa).

Residues 116 to 136 form a helical membrane-spanning segment; the sequence is SLIWGLLWCSIWLFFDKLVIL. UDP contacts are provided by Asn190 and Glu271. An E(x7)E glycosyltransferase motif motif is present at residues 263–271; the sequence is EGFGLTVLE.

The protein belongs to the glycosyltransferase group 1 family. Glycosyltransferase 4 subfamily.

It localises to the membrane. It participates in bacterial outer membrane biogenesis; LPS O-antigen biosynthesis. Its function is as follows. Involved in the assembly of the O-repeating unit during O-antigen biosynthesis. N-acetylglucosamine transferase accountable for the alpha-D-GlcNAc-1,4-beta-D-Gal linkage within the O-antigen. This chain is O-antigen biosynthesis glycosyltransferase WclY, found in Escherichia coli.